Reading from the N-terminus, the 332-residue chain is Ketol-acid reductoisomerase (NADP(+)) (332 aa).

The region spanning 1-182 is the KARI N-terminal Rossmann domain; it reads MAVIYYDKDC…GSNRAGILET (182 aa). Residues 25–28 and 83–86 contribute to the NADP(+) site; these read YGAQ and DTSQ. Residue His-108 is part of the active site. An NADP(+)-binding site is contributed by Gly-134. The 146-residue stretch at 183–328 folds into the KARI C-terminal knotted domain; it reads TFAEETETDL…AELRSMMSWL (146 aa). Residues Asp-191, Glu-195, Glu-227, and Glu-231 each contribute to the Mg(2+) site. A substrate-binding site is contributed by Ser-252.

This sequence belongs to the ketol-acid reductoisomerase family. It depends on Mg(2+) as a cofactor.

It carries out the reaction (2R)-2,3-dihydroxy-3-methylbutanoate + NADP(+) = (2S)-2-acetolactate + NADPH + H(+). The enzyme catalyses (2R,3R)-2,3-dihydroxy-3-methylpentanoate + NADP(+) = (S)-2-ethyl-2-hydroxy-3-oxobutanoate + NADPH + H(+). It participates in amino-acid biosynthesis; L-isoleucine biosynthesis; L-isoleucine from 2-oxobutanoate: step 2/4. It functions in the pathway amino-acid biosynthesis; L-valine biosynthesis; L-valine from pyruvate: step 2/4. In terms of biological role, involved in the biosynthesis of branched-chain amino acids (BCAA). Catalyzes an alkyl-migration followed by a ketol-acid reduction of (S)-2-acetolactate (S2AL) to yield (R)-2,3-dihydroxy-isovalerate. In the isomerase reaction, S2AL is rearranged via a Mg-dependent methyl migration to produce 3-hydroxy-3-methyl-2-ketobutyrate (HMKB). In the reductase reaction, this 2-ketoacid undergoes a metal-dependent reduction by NADPH to yield (R)-2,3-dihydroxy-isovalerate. This chain is Ketol-acid reductoisomerase (NADP(+)), found in Dehalococcoides mccartyi (strain CBDB1).